Reading from the N-terminus, the 265-residue chain is Mlc titration factor A (265 aa).

Zn(2+) contacts are provided by His111, His148, His152, and Glu211.

Belongs to the MtfA family. In terms of assembly, interacts with Mlc. Requires Zn(2+) as cofactor.

The protein localises to the cytoplasm. Functionally, involved in the modulation of the activity of the glucose-phosphotransferase system (glucose-PTS). Interacts with the transcriptional repressor Mlc, preventing its interaction with DNA and leading to the modulation of expression of genes regulated by Mlc, including ptsG, which encodes the PTS system glucose-specific EIICB component. Its function is as follows. Shows zinc-dependent metallopeptidase activity. This is Mlc titration factor A from Escherichia coli O17:K52:H18 (strain UMN026 / ExPEC).